Reading from the N-terminus, the 224-residue chain is Adenylate kinase (224 aa).

ATP is bound at residue 10–15 (GSGKST). An NMP region spans residues 30–59 (SSGDLIRGEIERKSSLGLEMAAYLSRGDLI). AMP-binding positions include Ser-31, Arg-36, 57–59 (DLI), 83–86 (GYPR), and Gln-90. The LID stretch occupies residues 124–161 (GRRICPNCGAVYHITYNPPKVPGICDVCGTKLIQRTDD). Position 125 (Arg-125) interacts with ATP. Zn(2+)-binding residues include Cys-128 and Cys-131. ATP is bound at residue 134-135 (VY). Cys-148 and Cys-151 together coordinate Zn(2+). AMP is bound by residues Arg-158 and Arg-169. Position 197 (Gly-197) interacts with ATP.

The protein belongs to the adenylate kinase family. Monomer.

It localises to the cytoplasm. It carries out the reaction AMP + ATP = 2 ADP. It functions in the pathway purine metabolism; AMP biosynthesis via salvage pathway; AMP from ADP: step 1/1. Functionally, catalyzes the reversible transfer of the terminal phosphate group between ATP and AMP. Plays an important role in cellular energy homeostasis and in adenine nucleotide metabolism. In Thermococcus gammatolerans (strain DSM 15229 / JCM 11827 / EJ3), this protein is Adenylate kinase.